The sequence spans 722 residues: MRALGLVGLVGVANAVCPYMTGELGRRDTNPDATEATEEFLSEYYLDDTDSYLTTDVGGPIEDQQSLKAGARGSTLLEDFIFRQKIQRFDHERVPERAVHARGAGAHGVFTSYGDFSNITAASFLSAEGKETPVFVRFSTVAGSRGSSDLARDVHGFATRFYTDEGNFDIVGNNIPVFFIQDAIQFPDLIHAVKPKGDREIPQAATAHDAAWDFFSQQPSTLHTLLWAMAGHGIPRSFRHVDGFGVHTFRLVTEDGSTKLVKFHWKTLQGLASMVWEEAQQISGKNPDYMRQDLFESIEAGRYPEWELNVQIMDEEDQLRFGFDLFDPTKIVPEEYVPLTPLGKMTLNRNPRNYFAETEQVMFQPGHVVRGVDFTEDPLLQQGRLFSYLDTQLNRNGGPNFEQLPINQPRVAIHNNNRDGAGQMFIPLNPDAYSPNTLKGSTLKQANQTAGRGFFTAPDRTANGNLVRAKSSTFDDAWSQPRLFWNSLLPAEKQFVVNAIRFENANVKSDVVKNNVIVQLNRISNDLATRVAKAIGVDAPEPDNTYYHDNTTSNIGAFGHRLQSLAGLKIAVLASVDAEESFSAATALKAELSNDNLDVIVVAERFSNGVNQTYSASDAIQFDAVVVAPGAEKLFGAKSAANSSSTLYPAGRPLEILVDAFRFGKPVAALGSGSTAFDNAGINTAVEGVYVADAVDESFANNLEEGLTVFKFLDRFALDSDE.

An N-terminal signal peptide occupies residues methionine 1 to alanine 15. Residues histidine 100 and asparagine 173 contribute to the active site. Tyrosine 388 is a binding site for heme.

This sequence belongs to the catalase family. Heme is required as a cofactor.

The protein resides in the secreted. The enzyme catalyses 2 H2O2 = O2 + 2 H2O. In terms of biological role, occurs in almost all aerobically respiring organisms and serves to protect cells from the toxic effects of hydrogen peroxide. The polypeptide is Catalase B (catB) (Emericella nidulans (strain FGSC A4 / ATCC 38163 / CBS 112.46 / NRRL 194 / M139) (Aspergillus nidulans)).